A 33-amino-acid chain; its full sequence is Brevinin 2AV (33 aa).

An intrachain disulfide couples Cys27 to Cys33.

As to expression, expressed by the skin glands.

Its subcellular location is the secreted. Its function is as follows. Has antibacterial activity. In Rana arvalis (Moor frog), this protein is Brevinin 2AV.